We begin with the raw amino-acid sequence, 319 residues long: Ninja-family protein Os07g0602900 (319 aa).

Disordered regions lie at residues 1–26, 69–152, and 181–234; these read MAAS…EKGG, LPGG…DAMY, and AEAM…LTMR. Over residues 70–79 the composition is skewed to gly residues; sequence PGGGGGGAGG. Residues 105–118 are compositionally biased toward basic and acidic residues; sequence ERWRRREMQSLKRL. Residues 185–196 show a composition bias toward polar residues; the sequence is DTSSSDNASCQN. Residues 225–234 are compositionally biased toward low complexity; the sequence is LRTLRSLTMR.

This sequence belongs to the Ninja family.

It is found in the nucleus. The chain is Ninja-family protein Os07g0602900 from Oryza sativa subsp. japonica (Rice).